The sequence spans 205 residues: Holliday junction branch migration complex subunit RuvA (205 aa).

The segment at 1–62 (MFEYVTGYVE…EDIMALYGFK (62 aa)) is domain I. The segment at 63 to 141 (TREERLLFTK…DVVPDAFVDL (79 aa)) is domain II. Residues 142 to 152 (FSDTERFDEKK) are flexible linker. The domain III stretch occupies residues 153-205 (GSSAELDEALEALRALGYAEREVSRVVPELLKESLTTDQYIKKALSLLLNGKR).

This sequence belongs to the RuvA family. As to quaternary structure, homotetramer. Forms an RuvA(8)-RuvB(12)-Holliday junction (HJ) complex. HJ DNA is sandwiched between 2 RuvA tetramers; dsDNA enters through RuvA and exits via RuvB. An RuvB hexamer assembles on each DNA strand where it exits the tetramer. Each RuvB hexamer is contacted by two RuvA subunits (via domain III) on 2 adjacent RuvB subunits; this complex drives branch migration. In the full resolvosome a probable DNA-RuvA(4)-RuvB(12)-RuvC(2) complex forms which resolves the HJ.

The protein resides in the cytoplasm. In terms of biological role, the RuvA-RuvB-RuvC complex processes Holliday junction (HJ) DNA during genetic recombination and DNA repair, while the RuvA-RuvB complex plays an important role in the rescue of blocked DNA replication forks via replication fork reversal (RFR). RuvA specifically binds to HJ cruciform DNA, conferring on it an open structure. The RuvB hexamer acts as an ATP-dependent pump, pulling dsDNA into and through the RuvAB complex. HJ branch migration allows RuvC to scan DNA until it finds its consensus sequence, where it cleaves and resolves the cruciform DNA. The sequence is that of Holliday junction branch migration complex subunit RuvA from Bacillus cereus (strain ATCC 14579 / DSM 31 / CCUG 7414 / JCM 2152 / NBRC 15305 / NCIMB 9373 / NCTC 2599 / NRRL B-3711).